A 121-amino-acid chain; its full sequence is Large ribosomal subunit protein bL12 (121 aa).

The protein belongs to the bacterial ribosomal protein bL12 family. In terms of assembly, homodimer. Part of the ribosomal stalk of the 50S ribosomal subunit. Forms a multimeric L10(L12)X complex, where L10 forms an elongated spine to which 2 to 4 L12 dimers bind in a sequential fashion. Binds GTP-bound translation factors.

In terms of biological role, forms part of the ribosomal stalk which helps the ribosome interact with GTP-bound translation factors. Is thus essential for accurate translation. The protein is Large ribosomal subunit protein bL12 of Klebsiella pneumoniae (strain 342).